A 251-amino-acid polypeptide reads, in one-letter code: Xylose/arabinose import ATP-binding protein XylG (251 aa).

One can recognise an ABC transporter domain in the interval 5–241; the sequence is LEIRDVHKSF…EITEVMTSFA (237 aa). An ATP-binding site is contributed by 37–44; the sequence is GDNGAGKS.

Belongs to the ABC transporter superfamily. As to quaternary structure, the complex is composed of two ATP-binding proteins (XylG), two transmembrane proteins (XylH) and a solute-binding protein (XylF).

The protein resides in the cell membrane. It catalyses the reaction D-xylose(out) + ATP + H2O = D-xylose(in) + ADP + phosphate + H(+). The enzyme catalyses L-arabinose(out) + ATP + H2O = L-arabinose(in) + ADP + phosphate + H(+). Functionally, part of the ABC transporter complex XylFGH involved in the uptake of xylose and arabinose. Responsible for energy coupling to the transport system. This is Xylose/arabinose import ATP-binding protein XylG from Sulfolobus acidocaldarius (strain ATCC 33909 / DSM 639 / JCM 8929 / NBRC 15157 / NCIMB 11770).